We begin with the raw amino-acid sequence, 421 residues long: Mitochondrial tRNA-specific 2-thiouridylase 1 (421 aa).

Residues 10–17 (ALSGGVDS) and methionine 36 contribute to the ATP site. Positions 96 to 98 (NPD) are interaction with target base in tRNA. Cysteine 101 acts as the Nucleophile in catalysis. A disulfide bridge connects residues cysteine 101 and cysteine 222. Residue glycine 126 coordinates ATP. The interaction with tRNA stretch occupies residues 171 to 173 (KDQ). Cysteine 222 serves as the catalytic Cysteine persulfide intermediate. Residues 334 to 335 (RH) form an interaction with tRNA region. A disordered region spans residues 395 to 421 (KGQRRAGMATESPSDSPEDGPGLSPLL).

This sequence belongs to the MnmA/TRMU family. Ubiquitous. Abundantly expressed in tissues with high metabolic rates including heart, liver, kidney, and brain.

It is found in the mitochondrion. The enzyme catalyses 5-taurinomethyluridine(34) in tRNA + S-sulfanyl-L-cysteinyl-[protein] + AH2 + ATP = 5-taurinomethyl-2-thiouridine(34) in tRNA + L-cysteinyl-[protein] + A + AMP + diphosphate + H(+). Its function is as follows. Catalyzes the 2-thiolation of uridine at the wobble position (U34) of mitochondrial tRNA(Lys), tRNA(Glu) and tRNA(Gln). Required for the formation of 5-taurinomethyl-2-thiouridine (tm5s2U) of mitochondrial tRNA(Lys), tRNA(Glu), and tRNA(Gln) at the wobble position. ATP is required to activate the C2 atom of the wobble base. The protein is Mitochondrial tRNA-specific 2-thiouridylase 1 (TRMU) of Homo sapiens (Human).